The chain runs to 160 residues: Phosphopantetheine adenylyltransferase (160 aa).

T10 is a binding site for substrate. ATP contacts are provided by residues T10–F11 and H18. K42, L74, and R88 together coordinate substrate. ATP contacts are provided by residues G89 to R91, E99, and H124 to T130.

Belongs to the bacterial CoaD family. Homohexamer. Requires Mg(2+) as cofactor.

The protein localises to the cytoplasm. The catalysed reaction is (R)-4'-phosphopantetheine + ATP + H(+) = 3'-dephospho-CoA + diphosphate. It participates in cofactor biosynthesis; coenzyme A biosynthesis; CoA from (R)-pantothenate: step 4/5. Reversibly transfers an adenylyl group from ATP to 4'-phosphopantetheine, yielding dephospho-CoA (dPCoA) and pyrophosphate. This Aliivibrio fischeri (strain MJ11) (Vibrio fischeri) protein is Phosphopantetheine adenylyltransferase.